Consider the following 935-residue polypeptide: C-1-tetrahydrofolate synthase, cytoplasmic (935 aa).

M1 carries the N-acetylmethionine modification. The tract at residues 2–291 is methylenetetrahydrofolate dehydrogenase and methenyltetrahydrofolate cyclohydrolase (D/C) domain; it reads APAEILNGRE…MLMQSTVESA (290 aa). Substrate contacts are provided by residues 52–56 and 99–101; these read YINVK and VQL. Residue K56 is part of the active site. Residues 172-174 and S197 contribute to the NADP(+) site; that span reads GRS. A substrate-binding site is contributed by 272-276; that stretch reads PGGVG. A formyltetrahydrofolate synthetase domain region spans residues 310 to 935; sequence LNLKTPDPSD…PETQQVNGLF (626 aa). S318 carries the phosphoserine modification. Position 380–387 (380–387) interacts with ATP; the sequence is TPLGEGKS. Residues S413 and S490 each carry the phosphoserine modification.

The protein in the N-terminal section; belongs to the tetrahydrofolate dehydrogenase/cyclohydrolase family. In the C-terminal section; belongs to the formate--tetrahydrofolate ligase family. Homodimer.

It localises to the cytoplasm. The enzyme catalyses (6R)-5,10-methylene-5,6,7,8-tetrahydrofolate + NADP(+) = (6R)-5,10-methenyltetrahydrofolate + NADPH. The catalysed reaction is (6R)-5,10-methenyltetrahydrofolate + H2O = (6R)-10-formyltetrahydrofolate + H(+). It catalyses the reaction (6S)-5,6,7,8-tetrahydrofolate + formate + ATP = (6R)-10-formyltetrahydrofolate + ADP + phosphate. The protein operates within one-carbon metabolism; tetrahydrofolate interconversion. Functionally, trifunctional enzyme that catalyzes the interconversion of three forms of one-carbon-substituted tetrahydrofolate: (6R)-5,10-methylene-5,6,7,8-tetrahydrofolate, 5,10-methenyltetrahydrofolate and (6S)-10-formyltetrahydrofolate. These derivatives of tetrahydrofolate are differentially required in nucleotide and amino acid biosynthesis, (6S)-10-formyltetrahydrofolate being required for purine biosynthesis while (6R)-5,10-methylene-5,6,7,8-tetrahydrofolate is used for serine and methionine biosynthesis for instance. In Pongo abelii (Sumatran orangutan), this protein is C-1-tetrahydrofolate synthase, cytoplasmic (MTHFD1).